The primary structure comprises 484 residues: Toluene efflux pump outer membrane protein TtgC (484 aa).

An N-terminal signal peptide occupies residues 1–17 (MTKSLLSLAVTAFILGG). Residue cysteine 18 is the site of N-palmitoyl cysteine attachment. Cysteine 18 carries S-diacylglycerol cysteine lipidation.

The protein belongs to the outer membrane factor (OMF) (TC 1.B.17) family.

The protein localises to the cell outer membrane. Functionally, the outer membrane component of a constitutive organic solvent efflux system. Is involved in export of toluene, styrene, m-xylene, propylbenzene and ethylbenzene. Also exports AMP and the antibiotics carbenicillin, nalidixic acid, chloramphenicol and tetracycline. In Pseudomonas putida (strain DOT-T1E), this protein is Toluene efflux pump outer membrane protein TtgC (ttgC).